Reading from the N-terminus, the 318-residue chain is D-alanine--D-alanine ligase B (318 aa).

In terms of domain architecture, ATP-grasp spans 116-311; that stretch reads KQVWQSLGIP…FQQLVLAILA (196 aa). An ATP-binding site is contributed by 142–197; sequence STELGFPLIVKPAHEGSSIGMAKVNSTQELVAAWQDAAKYDSQVLVEQWIHGPEFT. Asp-265, Glu-278, and Asn-280 together coordinate Mg(2+).

The protein belongs to the D-alanine--D-alanine ligase family. Requires Mg(2+) as cofactor. The cofactor is Mn(2+).

The protein localises to the cytoplasm. The catalysed reaction is 2 D-alanine + ATP = D-alanyl-D-alanine + ADP + phosphate + H(+). The protein operates within cell wall biogenesis; peptidoglycan biosynthesis. Functionally, cell wall formation. In Pseudomonas putida (strain ATCC 47054 / DSM 6125 / CFBP 8728 / NCIMB 11950 / KT2440), this protein is D-alanine--D-alanine ligase B.